A 97-amino-acid polypeptide reads, in one-letter code: Secreted Ly-6/uPAR domain-containing protein 2 (97 aa).

A signal peptide spans 1-22 (MQLGTGLLLAAVLSLQLAAAEA). 5 disulfides stabilise this stretch: Cys-25–Cys-47, Cys-28–Cys-34, Cys-40–Cys-68, Cys-72–Cys-88, and Cys-89–Cys-94. The region spanning 25–95 (CHQCTGFGGC…IACCQTSLCN (71 aa)) is the UPAR/Ly6 domain.

Interacts with CHRNA3, CHRNA4, CHRNA5, CHRNA7, CHRNB2 and CHRNB4. Interacts with CHRM1 and CHRM3 probably in an allosteric manner. As to expression, expressed at highest levels in cervix and esophagus, followed by adult and fetal skin. Expressed at lower levels in brain, lung, stomach, small intestine, colon, rectum, uterus, and thymus. Not detected in spleen nor bone marrow. Up-regulated 3-fold in psoriatic lesional skin. In the epidermis, predominantly produced by keratinocytes of the suprabasal epidermal compartment (at protein level). In attached gingiva, produced at highest levels by basal cells located in the lowermost epithelial layers (at protein level). Detected in serum (at protein level).

It localises to the secreted. Binds and may modulate the functional properties of nicotinic and muscarinic acetylcholine receptors. May regulate keratinocytes proliferation, differentiation and apoptosis. In vitro moderately inhibits ACh-evoked currents of alpha-3:beta-2-containing nAChRs and strongly these of alpha-4:beta-2-containing nAChRs, modulates alpha-7-containing nAChRs, and inhibits nicotine-induced signaling probably implicating alpha-3:beta-4-containing nAChRs. Proposed to act on alpha-3:beta-2 and alpha-7 nAChRs in an orthosteric, and on mAChRs, such as CHRM1 and CHRM3, in an allosteric manner. The polypeptide is Secreted Ly-6/uPAR domain-containing protein 2 (Homo sapiens (Human)).